Here is a 474-residue protein sequence, read N- to C-terminus: Gamma-aminobutyric acid receptor subunit beta-2 (474 aa).

An N-terminal signal peptide occupies residues 1–25; that stretch reads MWRVRKRGYFGIWSFPLIIAAVCAQ. The Extracellular portion of the chain corresponds to 26 to 244; sequence SVNDPSNMSL…SFKLKRNIGY (219 aa). Residues Asn32 and Asn104 are each glycosylated (N-linked (GlcNAc...) asparagine). Tyr121 is a binding site for histamine. An intrachain disulfide couples Cys160 to Cys174. The N-linked (GlcNAc...) asparagine glycan is linked to Asn173. Histamine is bound by residues 180-181 and Thr226; that span reads SY. 2 residues coordinate 4-aminobutanoate: Tyr181 and Thr226. 3 consecutive transmembrane segments (helical) span residues 245-266, 270-292, and 304-326; these read FILQ…SFWI, ASAA…NTHL, and AIDM…YALV. Residues 327 to 451 are Cytoplasmic-facing; the sequence is NYIFFGRGPQ…DLTDVNAIDR (125 aa). Residue Tyr403 is modified to Phosphotyrosine. The chain crosses the membrane as a helical span at residues 452-473; the sequence is WSRIFFPVVFSFFNIVYWLYYV.

It belongs to the ligand-gated ion channel (TC 1.A.9) family. Gamma-aminobutyric acid receptor (TC 1.A.9.5) subfamily. GABRB2 sub-subfamily. In terms of assembly, heteropentamer, formed by a combination of alpha (GABRA1-6), beta (GABRB1-3), gamma (GABRG1-3), delta (GABRD), epsilon (GABRE), rho (GABRR1-3), pi (GABRP) and theta (GABRQ) chains, each subunit exhibiting distinct physiological and pharmacological properties. Interacts with UBQLN1. May interact with KIF21B. Identified in a complex of 720 kDa composed of LHFPL4, NLGN2, GABRA1, GABRB2, GABRG2 and GABRB3. Post-translationally, glycosylated. In terms of tissue distribution, expressed in brain (at protein level), in cerebellar granule cells. Expressed in lungs, in alveolar epithelium.

Its subcellular location is the postsynaptic cell membrane. It is found in the cell membrane. It localises to the cytoplasmic vesicle membrane. The catalysed reaction is chloride(in) = chloride(out). With respect to regulation, allosterically activated by benzodiazepines and the anesthetic etomidate. Inhibited by the antagonist bicuculline. Potentiated by histamine. Beta subunit of the heteropentameric ligand-gated chloride channel gated by gamma-aminobutyric acid (GABA), a major inhibitory neurotransmitter in the brain. GABA-gated chloride channels, also named GABA(A) receptors (GABAAR), consist of five subunits arranged around a central pore and contain GABA active binding site(s) located at the alpha and beta subunit interface(s). When activated by GABA, GABAARs selectively allow the flow of chloride anions across the cell membrane down their electrochemical gradient. Chloride influx into the postsynaptic neuron following GABAAR opening decreases the neuron ability to generate a new action potential, thereby reducing nerve transmission. GABAARs containing alpha-1 and beta-2 or -3 subunits exhibit synaptogenic activity; the gamma-2 subunit being necessary but not sufficient to induce rapid synaptic contacts formation. Extrasynaptic beta-2 receptors contribute to the tonic GABAergic inhibition. Beta-containing GABAARs can simultaneously bind GABA and histamine where histamine binds at the interface of two neighboring beta subunits, which may be involved in the regulation of sleep and wakefulness. The sequence is that of Gamma-aminobutyric acid receptor subunit beta-2 from Rattus norvegicus (Rat).